The sequence spans 294 residues: 33 kDa chaperonin (294 aa).

Intrachain disulfides connect cysteine 238/cysteine 240 and cysteine 271/cysteine 274.

The protein belongs to the HSP33 family. Post-translationally, under oxidizing conditions two disulfide bonds are formed involving the reactive cysteines. Under reducing conditions zinc is bound to the reactive cysteines and the protein is inactive.

Its subcellular location is the cytoplasm. Redox regulated molecular chaperone. Protects both thermally unfolding and oxidatively damaged proteins from irreversible aggregation. Plays an important role in the bacterial defense system toward oxidative stress. The sequence is that of 33 kDa chaperonin from Thermoanaerobacter pseudethanolicus (strain ATCC 33223 / 39E) (Clostridium thermohydrosulfuricum).